A 123-amino-acid polypeptide reads, in one-letter code: Large ribosomal subunit protein bL19 (123 aa).

It belongs to the bacterial ribosomal protein bL19 family.

Its function is as follows. This protein is located at the 30S-50S ribosomal subunit interface and may play a role in the structure and function of the aminoacyl-tRNA binding site. The protein is Large ribosomal subunit protein bL19 of Thermomicrobium roseum (strain ATCC 27502 / DSM 5159 / P-2).